The following is a 123-amino-acid chain: Protein Wnt-3a (123 aa).

Ser-1 is lipidated: O-palmitoleoyl serine. Cys-89 and Cys-104 are joined by a disulfide. An N-linked (GlcNAc...) asparagine glycan is attached at Asn-90.

It belongs to the Wnt family. Post-translationally, disulfide bonds have critical and distinct roles in secretion and activity. Loss of each conserved cysteine results in high molecular weight oxidized Wnt oligomers, which are formed through inter-Wnt disulfide bonding. In terms of processing, palmitoleoylation is required for efficient binding to frizzled receptors. Depalmitoleoylation leads to Wnt signaling pathway inhibition.

It is found in the secreted. The protein resides in the extracellular space. It localises to the extracellular matrix. Its function is as follows. Ligand for members of the frizzled family of seven transmembrane receptors. Functions in the canonical Wnt signaling pathway that results in activation of transcription factors of the TCF/LEF family. Required for normal embryonic mesoderm development and formation of caudal somites. Required for normal morphogenesis of the developing neural tube. This Plethodon jordani (Red-cheeked salamander) protein is Protein Wnt-3a (WNT-3A).